The sequence spans 142 residues: Putative FK506-binding protein 9-like protein (142 aa).

The PPIase FKBP-type domain maps to 1-49; sequence MDMGLREMCVGEKRTVIIPPHLGYGEAGVDGEVPGSAVLVFDIELLELV. EF-hand domains lie at 60–95 and 105–140; these read WNGEVSPNLFEEIDKDGNGEVLLEEFSEYIHAQVAS and DAELIVKNMFTNQDRNGDGKVTAEEFKLKDQEAKQD. Positions 118, 120, 122, 124, and 129 each coordinate Ca(2+).

This Homo sapiens (Human) protein is Putative FK506-binding protein 9-like protein (FKBP9P1).